The chain runs to 213 residues: Pyridoxine/pyridoxamine 5'-phosphate oxidase (213 aa).

FMN contacts are provided by residues 60–65, 75–76, K82, and Q104; these read RMVLMK and YS. Position 65 (K65) interacts with substrate. Substrate is bound by residues Y122 and R126. Residues 139–140 and W184 each bind FMN; that span reads QS. Residue 190 to 192 participates in substrate binding; it reads RLH. An FMN-binding site is contributed by R194.

This sequence belongs to the pyridoxamine 5'-phosphate oxidase family. Homodimer. The cofactor is FMN.

The enzyme catalyses pyridoxamine 5'-phosphate + O2 + H2O = pyridoxal 5'-phosphate + H2O2 + NH4(+). It carries out the reaction pyridoxine 5'-phosphate + O2 = pyridoxal 5'-phosphate + H2O2. It participates in cofactor metabolism; pyridoxal 5'-phosphate salvage; pyridoxal 5'-phosphate from pyridoxamine 5'-phosphate: step 1/1. The protein operates within cofactor metabolism; pyridoxal 5'-phosphate salvage; pyridoxal 5'-phosphate from pyridoxine 5'-phosphate: step 1/1. Functionally, catalyzes the oxidation of either pyridoxine 5'-phosphate (PNP) or pyridoxamine 5'-phosphate (PMP) into pyridoxal 5'-phosphate (PLP). The protein is Pyridoxine/pyridoxamine 5'-phosphate oxidase of Bradyrhizobium diazoefficiens (strain JCM 10833 / BCRC 13528 / IAM 13628 / NBRC 14792 / USDA 110).